Reading from the N-terminus, the 434-residue chain is Histidinol dehydrogenase (434 aa).

Residues Y130, Q191, and N214 each contribute to the NAD(+) site. Residues S237, Q259, and H262 each coordinate substrate. Residues Q259 and H262 each coordinate Zn(2+). Residues E327 and H328 each act as proton acceptor in the active site. Residues H328, D361, E415, and H420 each contribute to the substrate site. D361 contributes to the Zn(2+) binding site. H420 lines the Zn(2+) pocket.

This sequence belongs to the histidinol dehydrogenase family. Requires Zn(2+) as cofactor.

The enzyme catalyses L-histidinol + 2 NAD(+) + H2O = L-histidine + 2 NADH + 3 H(+). It functions in the pathway amino-acid biosynthesis; L-histidine biosynthesis; L-histidine from 5-phospho-alpha-D-ribose 1-diphosphate: step 9/9. Functionally, catalyzes the sequential NAD-dependent oxidations of L-histidinol to L-histidinaldehyde and then to L-histidine. This chain is Histidinol dehydrogenase, found in Rhizobium meliloti (strain 1021) (Ensifer meliloti).